A 614-amino-acid polypeptide reads, in one-letter code: Chaperone protein DnaK (614 aa).

T173 carries the post-translational modification Phosphothreonine; by autocatalysis. 2 stretches are compositionally biased toward basic and acidic residues: residues 490–509 (EENA…RNEA) and 529–542 (EEDK…KEAL). Disordered regions lie at residues 490–510 (EENA…NEAD), 524–555 (GENI…DDIK), and 575–614 (QAAQ…DNQK). The span at 575 to 584 (QAAQAQQQAQ) shows a compositional bias: low complexity. Residues 599 to 614 (ADFKEVKDDDNQDNQK) show a composition bias toward basic and acidic residues.

It belongs to the heat shock protein 70 family.

Its function is as follows. Acts as a chaperone. This chain is Chaperone protein DnaK, found in Staphylococcus saprophyticus subsp. saprophyticus (strain ATCC 15305 / DSM 20229 / NCIMB 8711 / NCTC 7292 / S-41).